The following is a 221-amino-acid chain: Putative N-acetylmannosamine-6-phosphate 2-epimerase (221 aa).

This sequence belongs to the NanE family.

It carries out the reaction an N-acyl-D-glucosamine 6-phosphate = an N-acyl-D-mannosamine 6-phosphate. It functions in the pathway amino-sugar metabolism; N-acetylneuraminate degradation; D-fructose 6-phosphate from N-acetylneuraminate: step 3/5. Functionally, converts N-acetylmannosamine-6-phosphate (ManNAc-6-P) to N-acetylglucosamine-6-phosphate (GlcNAc-6-P). The sequence is that of Putative N-acetylmannosamine-6-phosphate 2-epimerase from Clostridium perfringens (strain SM101 / Type A).